A 632-amino-acid polypeptide reads, in one-letter code: tRNA uridine 5-carboxymethylaminomethyl modification enzyme MnmG (632 aa).

Residues 15–20, I127, and S182 contribute to the FAD site; that span reads GAGHAG. NAD(+) is bound at residue 276–290; sequence GPRYCPSIEDKIVRF. Q373 is a binding site for FAD.

Belongs to the MnmG family. Homodimer. Heterotetramer of two MnmE and two MnmG subunits. Requires FAD as cofactor.

The protein localises to the cytoplasm. In terms of biological role, NAD-binding protein involved in the addition of a carboxymethylaminomethyl (cmnm) group at the wobble position (U34) of certain tRNAs, forming tRNA-cmnm(5)s(2)U34. In Streptococcus pyogenes serotype M4 (strain MGAS10750), this protein is tRNA uridine 5-carboxymethylaminomethyl modification enzyme MnmG.